The following is a 234-amino-acid chain: Uridylate kinase (234 aa).

Lysine 9–glycine 12 contributes to the ATP binding site. Glycine 51 provides a ligand contact to UMP. Glycine 52 and arginine 56 together coordinate ATP. UMP contacts are provided by residues aspartate 71 and cysteine 132–threonine 139. 3 residues coordinate ATP: threonine 159, tyrosine 165, and aspartate 168.

Belongs to the UMP kinase family. In terms of assembly, homohexamer.

The protein resides in the cytoplasm. It catalyses the reaction UMP + ATP = UDP + ADP. It participates in pyrimidine metabolism; CTP biosynthesis via de novo pathway; UDP from UMP (UMPK route): step 1/1. With respect to regulation, inhibited by UTP. In terms of biological role, catalyzes the reversible phosphorylation of UMP to UDP. In Prochlorococcus marinus (strain MIT 9215), this protein is Uridylate kinase.